The chain runs to 94 residues: Large ribosomal subunit protein eL42 (94 aa).

Zn(2+) contacts are provided by Cys11, Cys14, Cys71, and Cys74. The segment at Cys11–Cys74 adopts a C4-type zinc-finger fold.

It belongs to the eukaryotic ribosomal protein eL42 family. Part of the 50S ribosomal subunit. Zn(2+) is required as a cofactor.

Functionally, binds to the 23S rRNA. The polypeptide is Large ribosomal subunit protein eL42 (Pyrococcus furiosus (strain ATCC 43587 / DSM 3638 / JCM 8422 / Vc1)).